The chain runs to 29 residues: Galanin (29 aa).

Ala29 bears the Alanine amide mark.

This sequence belongs to the galanin family.

It is found in the secreted. Functionally, contracts smooth muscle of the gastrointestinal and genitourinary tract, regulates growth hormone release, modulates insulin release, and may be involved in the control of adrenal secretion. The chain is Galanin (gal) from Oncorhynchus mykiss (Rainbow trout).